A 159-amino-acid polypeptide reads, in one-letter code: Endoribonuclease YbeY (159 aa).

3 residues coordinate Zn(2+): histidine 125, histidine 129, and histidine 135.

The protein belongs to the endoribonuclease YbeY family. It depends on Zn(2+) as a cofactor.

It localises to the cytoplasm. In terms of biological role, single strand-specific metallo-endoribonuclease involved in late-stage 70S ribosome quality control and in maturation of the 3' terminus of the 16S rRNA. This Lactiplantibacillus plantarum (strain ATCC BAA-793 / NCIMB 8826 / WCFS1) (Lactobacillus plantarum) protein is Endoribonuclease YbeY.